The sequence spans 380 residues: Septin homolog spn6 (380 aa).

The region spanning 27 to 297 is the Septin-type G domain; sequence KECGLTIMLC…ERYRREQLTN (271 aa). The interval 37–44 is G1 motif; the sequence is GASGTGKT. Residues 37 to 44, T72, G98, 177 to 185, and R246 contribute to the GTP site; these read GASGTGKT and KADTFTTPE. The tract at residues 95–98 is G3 motif; that stretch reads DTPG. Positions 176–179 are G4 motif; the sequence is AKAD. Positions 304 to 380 form a coiled coil; it reads KLKKEHYERL…KSYKGRGHKK (77 aa).

This sequence belongs to the TRAFAC class TrmE-Era-EngA-EngB-Septin-like GTPase superfamily. Septin GTPase family. In terms of assembly, component of the sporulation-specific septin complex composed of at least spn2, spn5, spn6 and spn7.

It localises to the cytoplasm. The protein localises to the forespore membrane. Septin-like protein involved in the correct orientation of forespore membrane extension during sporulation. The polypeptide is Septin homolog spn6 (spn6) (Schizosaccharomyces pombe (strain 972 / ATCC 24843) (Fission yeast)).